The sequence spans 3926 residues: Protein bassoon (3926 aa).

Positions 1-161 (MGNEVSLEGG…PTSPYSVPQI (161 aa)) are disordered. The N-myristoyl glycine moiety is linked to residue Gly2. Pro residues-rich tracts occupy residues 15–30 (PLPP…PGPG) and 58–72 (PPVP…PGPG). Residues 23 to 32 (PGPGPGPGPG) are 5 X 2 AA tandem repeats of P-G. The 7 X 2 AA tandem repeats of P-G stretch occupies residues 61 to 74 (PGPGPGPGPGPGPG). 2 stretches are compositionally biased toward polar residues: residues 90–105 (RAAS…TTPG) and 130–157 (QVDS…SPYS). Residue Ser145 is modified to Phosphoserine. Arg148 carries the omega-N-methylarginine modification. C4-type zinc fingers lie at residues 170–193 (CPIC…CTQC) and 198–220 (CNQC…CLNC). Disordered stretches follow at residues 231–343 (TTAP…EQTQ) and 366–459 (SVQP…KTMP). Over residues 233–243 (APRSKSQQQLH) the composition is skewed to polar residues. Ser244 and Ser248 each carry phosphoserine. Residues 366 to 377 (SVQPEADTQGQP) are compositionally biased toward polar residues. C4-type zinc fingers lie at residues 465–488 (CPLC…CTTC) and 493–515 (CNLC…CLNC). 2 disordered regions span residues 524–927 (SLGE…LQGG) and 940–1248 (GSYG…AEGT). The span at 552 to 569 (PLKQKGPQGLGQPSGPLP) shows a compositional bias: low complexity. Repeat copies occupy residues 571–577 (KASPLST), 578–584 (KASPLPS), and 585–591 (KASPQAK). The 3 X 7 AA tandem repeats of K-A-S-P-[LQ]-[APS]-[KST] stretch occupies residues 571-591 (KASPLSTKASPLPSKASPQAK). Pro residues predominate over residues 619 to 631 (MPKPPPETTPTPA). A compositionally biased stretch (polar residues) spans 671 to 680 (QDASRSPQSL). A compositionally biased stretch (low complexity) spans 681–698 (SDTGYSSDGISSSQSEIT). Acidic residues predominate over residues 771-787 (FDSDEELEDILEEDEDS). Positions 788-797 (AEWRRRREQQ) are enriched in basic and acidic residues. Over residues 851 to 862 (SAEEDNLEEDDT) the composition is skewed to acidic residues. An Omega-N-methylarginine modification is found at Arg867. Position 970 is a phosphoserine (Ser970). Residues 984-1001 (PASTPSYTSGTSPTSLSS) are compositionally biased toward low complexity. Residues 1037 to 1092 (IEDSSEEEELREEEELLREQEKMREVEQQRIRSTARKTRRDKEELRAQRRRERSKT) are a coiled coil. Acidic residues predominate over residues 1039 to 1052 (DSSEEEELREEEEL). A phosphoserine mark is found at Ser1040 and Ser1041. Residues 1053–1066 (LREQEKMREVEQQR) show a composition bias toward basic and acidic residues. Position 1090 is a phosphoserine (Ser1090). Position 1092 is a phosphothreonine (Thr1092). Phosphoserine occurs at positions 1098 and 1104. Residues 1107–1122 (EELRQAAEMEELHRSS) show a composition bias toward basic and acidic residues. Composition is skewed to low complexity over residues 1123–1133 (CSEYSPSPSLD) and 1163–1180 (SPTE…SGRP). Residues 1181 to 1208 (LKSAEEAYEEMMRKAELLQRQQGQAAGA) are a coiled coil. The segment covering 1182–1197 (KSAEEAYEEMMRKAEL) has biased composition (basic and acidic residues). The segment covering 1199–1209 (QRQQGQAAGAR) has biased composition (low complexity). At Ser1226 the chain carries Phosphoserine. Residues 1276-1294 (RDLAFAEDKKKEKQFLNAE) are a coiled coil. Disordered stretches follow at residues 1298–1547 (MDPM…RLVW) and 1570–1620 (RMVH…RVPS). The segment covering 1322 to 1332 (SFSTPTSSDSS) has biased composition (low complexity). O-linked (GlcNAc) threonine glycosylation occurs at Thr1343. Residues 1346 to 1355 (FAKETQDPLK) show a composition bias toward basic and acidic residues. 2 stretches are compositionally biased toward low complexity: residues 1358–1367 (SSPASPSSAS) and 1377–1392 (GPGT…CPAG). The O-linked (GlcNAc) threonine glycan is linked to Thr1384. Residues 1408 to 1434 (RSPSPSSTAHSYGHSPTTANYGSQTED) are compositionally biased toward polar residues. Over residues 1466–1493 (PSRAYSYFASSSPPLSPSSPSESPTFSP) the composition is skewed to low complexity. Phosphoserine occurs at positions 1477, 1486, and 1488. Residues 1570-1598 (RMVHASASTSPLCSPTETQPTTHGYSQTT) show a composition bias toward polar residues. The span at 1606–1616 (PPEPPGPPGFP) shows a compositional bias: pro residues. 2 positions are modified to omega-N-methylarginine: Arg1787 and Arg1791. Arg1801 is subject to Asymmetric dimethylarginine; alternate. Arg1801 carries the post-translational modification Omega-N-methylarginine; alternate. Arg1813 is subject to Omega-N-methylarginine. The disordered stretch occupies residues 1924 to 1978 (PEKSMADAAPPGQSSSPFYGPRDPEPPEPPTYRAQGVVGPGPHEEQRPYPQGLPG). Ser1985 and Ser2041 each carry phosphoserine. Omega-N-methylarginine is present on residues Arg2046 and Arg2076. Asymmetric dimethylarginine is present on residues Arg2250, Arg2260, and Arg2266. Positions 2287-2309 (AAKAPGAGGPSRPEMPVGAAREE) are disordered. A glycan (O-linked (GlcNAc) threonine) is linked at Thr2314. The segment covering 2324–2341 (GAPAPAPLAGQKPPADAA) has biased composition (low complexity). Disordered stretches follow at residues 2324–2370 (GAPA…KQQE) and 2532–2568 (PSSA…ACEL). Residues 2351-2476 (RPGFEKEEAS…EEQKQRQKAP (126 aa)) adopt a coiled-coil conformation. Over residues 2353-2370 (GFEKEEASQEERQRKQQE) the composition is skewed to basic and acidic residues. Residues 2533-2543 (SSASDMSLQTE) are compositionally biased toward polar residues. Ser2570 carries the phosphoserine modification. Residues Thr2587 and Thr2614 each carry the phosphothreonine modification. The tract at residues 2601-2655 (RRRARRSADCSVQTDDEDSAEWEQPVRRRRSRLPRHSDSGSDSKHDATASSSSAA) is disordered. Residues 2635–2647 (RHSDSGSDSKHDA) show a composition bias toward basic and acidic residues. Thr2691 is a glycosylation site (O-linked (GlcNAc) threonine). The interaction with DAO stretch occupies residues 2721–3268 (EPDGQAQGVA…PGSSGRPGKE (548 aa)). Ser2802, Ser2851, and Ser2857 each carry phosphoserine. Residues 2845–2865 (TLQRSLSDPKPLSPTAEESAK) form a disordered region. The O-linked (GlcNAc) threonine glycan is linked to Thr2936. Residues 2939 to 2981 (SLLRELDRDLRLVEHESTKLRKKQAELDEEEKEIDAKLKYLEL) are a coiled coil. A Phosphoserine modification is found at Ser3013. Over residues 3039–3055 (AAAPATPSGPTAFQQPR) the composition is skewed to low complexity. 3 disordered regions span residues 3039–3375 (AAAP…FSPI), 3424–3551 (GMSS…PRAH), and 3572–3897 (EAYH…SVFS). Residues 3083-3095 (YPGPSTYPAPAFP) are compositionally biased toward pro residues. Residues 3165-3176 (ASPVVPMSSAPS) are compositionally biased toward low complexity. Residues 3205 to 3228 (SVSQSPAPTYPSDSHYTSLEQNVP) are compositionally biased toward polar residues. A Phosphoserine modification is found at Ser3291. Composition is skewed to basic and acidic residues over residues 3321-3333 (GDSD…RVEK), 3363-3375 (QGME…FSPI), and 3465-3477 (GYER…ERLQ). Position 3373 is a phosphoserine (Ser3373). The residue at position 3492 (Arg3492) is an Omega-N-methylarginine. Basic and acidic residues-rich tracts occupy residues 3540 to 3551 (VQEHVKDGPRAH), 3583 to 3593 (WFDKPRDARSD), 3628 to 3647 (LWPH…EHRH), and 3657 to 3681 (HTGE…EARP). The span at 3703–3712 (AEYSQPSRAS) shows a compositional bias: polar residues. Over residues 3741–3807 (PQAQPQLQGR…RLQQQSQPTT (67 aa)) the composition is skewed to low complexity. At Arg3808 the chain carries Omega-N-methylarginine. Low complexity-rich tracts occupy residues 3849-3860 (AKAPQQGRAPQA) and 3882-3892 (GAPAGQPGADG).

As to quaternary structure, interacts with PCLO, ERC2/CAST1, RIMS1 and UNC13A. Interacts with TPRG1L. Interacts with DYNLL1 and DYNLL2; these interactions potentially link PTVs to dynein and myosin V motor complexes. Interacts with ATG5; this interaction is important for the regulation of presynaptic autophagy. Interacts (via C-terminus) with TRIO (via N-terminus). Interacts with CTBP1. Interacts with SIAH1; this interaction negatively regulates SIAH1 E3 ligase activity. Interacts (via coiled region) with DAO; the interaction is direct. Myristoylated. The N-terminal myristoylation is not sufficient for presynaptic localization. In terms of tissue distribution, exclusively expressed in brain.

Its subcellular location is the cytoplasm. The protein resides in the presynaptic active zone. The protein localises to the cytoskeleton. It is found in the cytoplasmic vesicle. It localises to the secretory vesicle. Its subcellular location is the synaptic vesicle membrane. In terms of biological role, scaffold protein of the presynaptic cytomatrix at the active zone (CAZ) which is the place in the synapse where neurotransmitter is released. After synthesis, participates in the formation of Golgi-derived membranous organelles termed Piccolo-Bassoon transport vesicles (PTVs) that are transported along axons to sites of nascent synaptic contacts. At the presynaptic active zone, regulates the spatial organization of synaptic vesicle cluster, the protein complexes that execute membrane fusion and compensatory endocytosis. Also functions in processes other than assembly such as the regulation of specific presynaptic protein ubiquitination by interacting with SIAH1 or the regulation of presynaptic autophagy by associating with ATG5. Also mediates synapse to nucleus communication leading to reconfiguration of gene expression by associating with the transcriptional corepressor CTBP1 and by subsequently reducing the size of its pool available for nuclear import. Inhibits the activity of the proportion of DAO enzyme that localizes to the presynaptic active zone, which may modulate synaptic transmission. The protein is Protein bassoon of Homo sapiens (Human).